Consider the following 212-residue polypeptide: Uracil phosphoribosyltransferase (212 aa).

Residues R78, R103, and 130–138 (DPMLATGSS) contribute to the 5-phospho-alpha-D-ribose 1-diphosphate site. Residues I193 and 198-200 (GDA) each bind uracil. D199 serves as a coordination point for 5-phospho-alpha-D-ribose 1-diphosphate.

Belongs to the UPRTase family. Mg(2+) is required as a cofactor.

It carries out the reaction UMP + diphosphate = 5-phospho-alpha-D-ribose 1-diphosphate + uracil. It functions in the pathway pyrimidine metabolism; UMP biosynthesis via salvage pathway; UMP from uracil: step 1/1. Allosterically activated by GTP. Catalyzes the conversion of uracil and 5-phospho-alpha-D-ribose 1-diphosphate (PRPP) to UMP and diphosphate. This chain is Uracil phosphoribosyltransferase, found in Pseudomonas fluorescens (strain Pf0-1).